A 777-amino-acid polypeptide reads, in one-letter code: MVRTKSSSSSASSSSQKSPIKSNNGAGGGGSSSSHRQSHRTSIDERKSSSHAHSNNSNVSSSSRRAATATSGSSSPEGDDDTTTDDLTPTGSSPRSCNGRGHSSVHKQNLYVVSFPIIFLFNVLRSLIYQLFCIFRYLYGASTKVLYRPHRRDCNIEIVVQNSKEQQLQLQQHQHNQTLSYSLETGGVSGGSGGEQQVQVQPQRIRALQPLEMATNRPGGGYSPGPGDPLLAKQKHHHRRAFEYISKALKIDEENEGHKELAIELYRKGIKELEDGIAVDCWNGRGDVWDRAQRLHDKMQTNLSMARDRLHFLALREEDLQMQRLSLKEKQPAPKQPQRSQTKDPVKQPMLTSLNADPVKMKVRSSGYGPKQNGTSSSRPAPSGQTATGASGRKLTVGTKRPGNLPVTNKSQTLPRNLGSKTTVGAVQRQPAKTAATPPAVRRQFSSGRNTPPQRSRTPINNNASSGSGASTPMVSVKGVEQKLVQLILDEIVEGGAKVEWTDIAGQDVAKQALQEMVILPSVRPELFTGLRAPAKGLLLFGPPGNGKTLLARAVATECSATFLNISAASLTSKYVGDGEKLVRALFAVARHMQPSIIFIDEVDSLLSERSSNEHEASRRLKTEFLVEFDGLPGNPDGDRIVVLAATNRPQELDEAALRRFTKRVYVSLPDEQTRELLLNRLLQKQGSPLDTEALRRLAKITEGYSGSDLTALAKDAALEPIRELNVEQVKCLDISAMRPITEKDFHNSLKRIRRSVAPQSLNSYEKWSQDYGDITI.

Low complexity-rich tracts occupy residues 1 to 24, 51 to 76, and 85 to 94; these read MVRT…KSNN, HAHS…SSSP, and DDLTPTGSSP. The tract at residues 1-103 is disordered; the sequence is MVRTKSSSSS…PRSCNGRGHS (103 aa). Residues 1 to 116 lie on the Cytoplasmic side of the membrane; it reads MVRTKSSSSS…KQNLYVVSFP (116 aa). The tract at residues 1-215 is required for localization to punctate cytoplasmic foci; sequence MVRTKSSSSS…RALQPLEMAT (215 aa). Positions 117–137 form an intramembrane region, helical; that stretch reads IIFLFNVLRSLIYQLFCIFRY. The Cytoplasmic portion of the chain corresponds to 138–777; sequence LYGASTKVLY…WSQDYGDITI (640 aa). Positions 213–777 are sufficient for interaction with microtubules and microtubule severing; the sequence is MATNRPGGGY…WSQDYGDITI (565 aa). Residues 238 to 313 enclose the MIT domain; the sequence is HRRAFEYISK…SMARDRLHFL (76 aa). Positions 327 to 474 are disordered; the sequence is LKEKQPAPKQ…SSGSGASTPM (148 aa). Composition is skewed to polar residues over residues 372-389, 406-425, and 444-460; these read QNGT…TATG, PVTN…TTVG, and QFSS…RTPI. Positions 461 to 471 are enriched in low complexity; that stretch reads NNNASSGSGAS. The required for interaction with microtubules stretch occupies residues 462–474; it reads NNASSGSGASTPM. 542 to 549 serves as a coordination point for ATP; sequence GPPGNGKT.

This sequence belongs to the AAA ATPase family. Spastin subfamily. As to quaternary structure, homohexamer. The homohexamer is stabilized by ATP-binding. The homohexamer may adopt a ring conformation through which microtubules pass prior to being severed. Interacts with microtubules. Interacts with atl; may be involved in microtubule dynamics.

Its subcellular location is the membrane. It is found in the cytoplasm. It localises to the cytoskeleton. The protein resides in the microtubule organizing center. The protein localises to the centrosome. Its subcellular location is the chromosome. It is found in the lipid droplet. The catalysed reaction is n ATP + n H2O + a microtubule = n ADP + n phosphate + (n+1) alpha/beta tubulin heterodimers.. In terms of biological role, ATP-dependent microtubule severing protein. Stimulates microtubule minus-end depolymerization and poleward microtubule flux in the mitotic spindle. Regulates microtubule stability in the neuromuscular junction synapse. Involved in lipid metabolism by regulating the size and distribution of lipid droplets. Involved in axon regeneration by regulating microtubule severing. The polypeptide is Spastin (Drosophila willistoni (Fruit fly)).